The chain runs to 111 residues: UPF0060 membrane protein Pden_1837 (111 aa).

Transmembrane regions (helical) follow at residues 7–27, 30–50, 62–82, and 91–111; these read IAVY…FWAW, LGKS…FAWL, AYAA…WLTE, and ILGG…PRAA.

Belongs to the UPF0060 family.

Its subcellular location is the cell inner membrane. This Paracoccus denitrificans (strain Pd 1222) protein is UPF0060 membrane protein Pden_1837.